The primary structure comprises 414 residues: Tyrosine--tRNA ligase (414 aa).

Tyrosine 38 contacts L-tyrosine. A 'HIGH' region motif is present at residues 43–52 (PTAISLHLGN). The L-tyrosine site is built by tyrosine 165 and glutamine 169. The short motif at 227–231 (KIGKS) is the 'KMSKS' region element. An ATP-binding site is contributed by lysine 230. One can recognise an S4 RNA-binding domain in the interval 349-413 (DDLFLTLVDS…KGKKQYWVIY (65 aa)).

Belongs to the class-I aminoacyl-tRNA synthetase family. TyrS type 1 subfamily. In terms of assembly, homodimer.

The protein resides in the cytoplasm. The enzyme catalyses tRNA(Tyr) + L-tyrosine + ATP = L-tyrosyl-tRNA(Tyr) + AMP + diphosphate + H(+). Its function is as follows. Catalyzes the attachment of tyrosine to tRNA(Tyr) in a two-step reaction: tyrosine is first activated by ATP to form Tyr-AMP and then transferred to the acceptor end of tRNA(Tyr). The protein is Tyrosine--tRNA ligase of Mycoplasmopsis pulmonis (strain UAB CTIP) (Mycoplasma pulmonis).